We begin with the raw amino-acid sequence, 283 residues long: Diaminopimelate epimerase (283 aa).

Residues Asn-13, Gln-45, and Asn-65 each contribute to the substrate site. The active-site Proton donor is Cys-74. Residues Gly-75–Asn-76, Asn-156, Asn-190, and Glu-208–Arg-209 each bind substrate. Cys-217 (proton acceptor) is an active-site residue. Position 218–219 (Gly-218–Ser-219) interacts with substrate.

Belongs to the diaminopimelate epimerase family. Homodimer.

The protein localises to the cytoplasm. It catalyses the reaction (2S,6S)-2,6-diaminopimelate = meso-2,6-diaminopimelate. It functions in the pathway amino-acid biosynthesis; L-lysine biosynthesis via DAP pathway; DL-2,6-diaminopimelate from LL-2,6-diaminopimelate: step 1/1. In terms of biological role, catalyzes the stereoinversion of LL-2,6-diaminopimelate (L,L-DAP) to meso-diaminopimelate (meso-DAP), a precursor of L-lysine and an essential component of the bacterial peptidoglycan. The sequence is that of Diaminopimelate epimerase from Bartonella tribocorum (strain CIP 105476 / IBS 506).